The following is a 170-amino-acid chain: Putative pre-16S rRNA nuclease (170 aa).

Residues 1–18 (MGTDDRLPDRPGADDPGR) are compositionally biased toward basic and acidic residues. Residues 1 to 22 (MGTDDRLPDRPGADDPGRGRRI) are disordered.

It belongs to the YqgF nuclease family.

Its subcellular location is the cytoplasm. Functionally, could be a nuclease involved in processing of the 5'-end of pre-16S rRNA. This Mycolicibacterium smegmatis (strain ATCC 700084 / mc(2)155) (Mycobacterium smegmatis) protein is Putative pre-16S rRNA nuclease.